The following is a 208-amino-acid chain: UPF0637 protein BCB4264_A4063 (208 aa).

The protein belongs to the UPF0637 family.

The protein is UPF0637 protein BCB4264_A4063 of Bacillus cereus (strain B4264).